Here is a 297-residue protein sequence, read N- to C-terminus: N-acetylneuraminate lyase (297 aa).

Ser47 and Thr48 together coordinate aceneuramate. The active-site Proton donor is the Tyr137. Lys165 functions as the Schiff-base intermediate with substrate in the catalytic mechanism. Aceneuramate is bound by residues Thr167, Gly189, Asp191, Glu192, and Ser208.

The protein belongs to the DapA family. NanA subfamily. In terms of assembly, homotetramer.

The protein resides in the cytoplasm. It catalyses the reaction aceneuramate = aldehydo-N-acetyl-D-mannosamine + pyruvate. Its pathway is amino-sugar metabolism; N-acetylneuraminate degradation; D-fructose 6-phosphate from N-acetylneuraminate: step 1/5. Functionally, catalyzes the reversible aldol cleavage of N-acetylneuraminic acid (sialic acid; Neu5Ac) to form pyruvate and N-acetylmannosamine (ManNAc) via a Schiff base intermediate. The protein is N-acetylneuraminate lyase of Escherichia coli O139:H28 (strain E24377A / ETEC).